Here is a 230-residue protein sequence, read N- to C-terminus: Oxygen-evolving enhancer protein 3-2, chloroplastic (230 aa).

Residues 1-49 (MAQAVTSMAGLRGASQAVLEGSLQINGSNRLNISRVSVGSQRTGLVIRA) constitute a chloroplast transit peptide. The transit peptide at 50 to 82 (QQNVSVPESSRRSVIGLVAAGLAGGSFVKAVFA) directs the protein to the thylakoid. At Ser-125 the chain carries Phosphoserine. Thr-195 carries the post-translational modification Phosphothreonine. Phosphotyrosine is present on Tyr-215. Position 216 is a phosphoserine (Ser-216). Thr-218 is subject to Phosphothreonine.

It belongs to the PsbQ family.

It is found in the plastid. It localises to the chloroplast thylakoid membrane. Functionally, required for photosystem II assembly/stability and photoautotrophic growth under low light conditions. The protein is Oxygen-evolving enhancer protein 3-2, chloroplastic (PSBQ2) of Arabidopsis thaliana (Mouse-ear cress).